We begin with the raw amino-acid sequence, 579 residues long: Cytochrome P450 monooxygenase ORF6 (579 aa).

The N-linked (GlcNAc...) asparagine glycan is linked to Asn2. A helical membrane pass occupies residues 7–29 (PLGSFVGTTLLLFILYKLVKLAY). Asn194 and Asn390 each carry an N-linked (GlcNAc...) asparagine glycan. A heme-binding site is contributed by Cys512.

It belongs to the cytochrome P450 family. Heme is required as a cofactor.

Its subcellular location is the membrane. It functions in the pathway sesquiterpene biosynthesis. Cytochrome P450 monooxygenase; part of the gene cluster that mediates the biosynthesis of PR-toxin, a bicyclic sesquiterpene belonging to the eremophilane class and acting as a mycotoxin. The first step of the pathway is catalyzed by the aristolochene synthase which performs the cyclization of trans,trans-farnesyl diphosphate (FPP) to the bicyclic sesquiterpene aristolochene. Following the formation of aristolochene, the non-oxygenated aristolochene is converted to the trioxygenated intermediate eremofortin B, via 7-epi-neopetasone. This conversion appears to involve three enzymes, a hydroxysterol oxidase-like enzyme, the quinone-oxidase prx3 that forms the quinone-type-structure in the bicyclic nucleus of aristolochene with the C8-oxo group and the C-3 hydroxyl group, and the P450 monooxygenase ORF6 that introduces the epoxide at the double bond between carbons 1 and 2. No monoxy or dioxy-intermediates have been reported to be released to the broth, so these three early oxidative reactions may be coupled together. Eremofortin B is further oxidized by another P450 monooxygenase, that introduces a second epoxide between carbons 7 and 11 prior to acetylation to eremofortin A by the acetyltransferase ORF8. The second epoxidation may be performed by a second P450 monooxygenase. After the acetylation step, eremofortin A is converted to eremofortin C and then to PR-toxin. First the conversion of eremofortin A to eremofortin C proceeds by oxidation of the side chain of the molecule at C-12 and is catalyzed by the short-chain oxidoreductase prx1. The cytochrome P450 monooxygenase ORF6 is probably also involved in this step. The primary alcohol formed at C-12 is finally oxidized by the short-chain alcohol dehydrogenase prx4 that forms PR-toxin. The protein is Cytochrome P450 monooxygenase ORF6 of Penicillium roqueforti (strain FM164).